We begin with the raw amino-acid sequence, 153 residues long: Allergen Pet c 1 (153 aa).

This sequence belongs to the BetVI family. May form dimers.

This is Allergen Pet c 1 from Petroselinum crispum (Parsley).